The sequence spans 533 residues: Peptide chain release factor 3 (533 aa).

A tr-type G domain is found at 9 to 284 (ARRRTFAIIS…ALCELSPPPL (276 aa)). GTP-binding positions include 18–25 (SHPDAGKT), 95–99 (DTPGH), and 149–152 (NKLD).

This sequence belongs to the TRAFAC class translation factor GTPase superfamily. Classic translation factor GTPase family. PrfC subfamily.

It localises to the cytoplasm. In terms of biological role, increases the formation of ribosomal termination complexes and stimulates activities of RF-1 and RF-2. It binds guanine nucleotides and has strong preference for UGA stop codons. It may interact directly with the ribosome. The stimulation of RF-1 and RF-2 is significantly reduced by GTP and GDP, but not by GMP. This Cupriavidus necator (strain ATCC 17699 / DSM 428 / KCTC 22496 / NCIMB 10442 / H16 / Stanier 337) (Ralstonia eutropha) protein is Peptide chain release factor 3.